Reading from the N-terminus, the 309-residue chain is tRNA pseudouridine synthase B (309 aa).

The Nucleophile role is filled by aspartate 52.

Belongs to the pseudouridine synthase TruB family. Type 1 subfamily.

The catalysed reaction is uridine(55) in tRNA = pseudouridine(55) in tRNA. Functionally, responsible for synthesis of pseudouridine from uracil-55 in the psi GC loop of transfer RNAs. The protein is tRNA pseudouridine synthase B of Leptospira interrogans serogroup Icterohaemorrhagiae serovar Lai (strain 56601).